We begin with the raw amino-acid sequence, 123 residues long: Anti-lipopolysaccharide factor (123 aa).

An N-terminal signal peptide occupies residues 1–26 (MRKGVVAGLCLALVVMCLYLPQPCEA). Asn45 is a glycosylation site (N-linked (GlcNAc...) asparagine). Cysteines 55 and 76 form a disulfide.

Isoform 1 is highly expressed in muscle and stomach, moderately in heart and gill and at lower levels in hemocytes and hepatopancreas. Isoform 2 is mainly expressed in gill, hepatopancreas, muscle and eyestalk.

It localises to the secreted. May bind to bacterial LPS and thus specifically inhibit the LPS-mediated activation of the hemolymph coagulation. It has a strong antibacterial effect especially on the growth of Gram-negative bacteria. The polypeptide is Anti-lipopolysaccharide factor (Portunus trituberculatus (Swimming crab)).